The chain runs to 273 residues: Dermonecrotic toxin LhSicTox-alphaIA2biv (273 aa).

His-5 is an active-site residue. 2 residues coordinate Mg(2+): Glu-25 and Asp-27. Catalysis depends on His-41, which acts as the Nucleophile. Intrachain disulfides connect Cys-45–Cys-51 and Cys-47–Cys-190. A Mg(2+)-binding site is contributed by Asp-85.

It belongs to the arthropod phospholipase D family. Class II subfamily. Requires Mg(2+) as cofactor. In terms of tissue distribution, expressed by the venom gland.

It localises to the secreted. It catalyses the reaction an N-(acyl)-sphingosylphosphocholine = an N-(acyl)-sphingosyl-1,3-cyclic phosphate + choline. It carries out the reaction an N-(acyl)-sphingosylphosphoethanolamine = an N-(acyl)-sphingosyl-1,3-cyclic phosphate + ethanolamine. The catalysed reaction is a 1-acyl-sn-glycero-3-phosphocholine = a 1-acyl-sn-glycero-2,3-cyclic phosphate + choline. The enzyme catalyses a 1-acyl-sn-glycero-3-phosphoethanolamine = a 1-acyl-sn-glycero-2,3-cyclic phosphate + ethanolamine. Dermonecrotic toxins cleave the phosphodiester linkage between the phosphate and headgroup of certain phospholipids (sphingolipid and lysolipid substrates), forming an alcohol (often choline) and a cyclic phosphate. This toxin acts on sphingomyelin (SM). It may also act on ceramide phosphoethanolamine (CPE), lysophosphatidylcholine (LPC) and lysophosphatidylethanolamine (LPE), but not on lysophosphatidylserine (LPS), and lysophosphatidylglycerol (LPG). It acts by transphosphatidylation, releasing exclusively cyclic phosphate products as second products. Induces dermonecrosis, hemolysis, increased vascular permeability, edema, inflammatory response, and platelet aggregation. This is Dermonecrotic toxin LhSicTox-alphaIA2biv from Loxosceles hirsuta (Recluse spider).